A 201-amino-acid polypeptide reads, in one-letter code: Large ribosomal subunit protein uL4 (201 aa).

Residues 39–67 are disordered; the sequence is ARQGSRAQKTRSEVAGGGRKPWKQKGSGR.

The protein belongs to the universal ribosomal protein uL4 family. Part of the 50S ribosomal subunit.

Functionally, one of the primary rRNA binding proteins, this protein initially binds near the 5'-end of the 23S rRNA. It is important during the early stages of 50S assembly. It makes multiple contacts with different domains of the 23S rRNA in the assembled 50S subunit and ribosome. In terms of biological role, forms part of the polypeptide exit tunnel. In Marinomonas sp. (strain MWYL1), this protein is Large ribosomal subunit protein uL4.